Consider the following 174-residue polypeptide: MCCVYRMNRPASGLTVVFCGKLSGKPGPKSAAWRMPWQKSGADDGGENPRFFSAGPRTEHKGSRRRLRFTRPCAWPCGFSVMWPPCRVRAVPCLHLSRAGGDARVRFAAAVTRSLLPVCRDFPVVHPLRFRGLTLQLPSAVCVRLRLPLRPVHPRLIARLLWRHGTARCRGICE.

Positions 1-31 (MCCVYRMNRPASGLTVVFCGKLSGKPGPKSA) are cleaved as a signal peptide. Positions 39–59 (KSGADDGGENPRFFSAGPRTE) are disordered.

This is an uncharacterized protein from Escherichia coli (strain K12).